Consider the following 447-residue polypeptide: NADH-ubiquinone oxidoreductase chain 4 (447 aa).

13 helical membrane passes run 28–48, 56–76, 85–105, 110–130, 141–161, 183–203, 213–233, 246–266, 273–293, 301–321, 343–365, 380–400, and 409–431; these read IFLA…FCDI, MISY…LMAS, YVNL…FTFS, FMFY…ILGW, IYLL…IFYI, FLYL…LVHL, PVSG…YGLL, FNYI…LICL, ALIA…LMTM, SYTL…LANI, SLSL…LNLL, LTMI…LYLF, and YSGV…LHWL.

This sequence belongs to the complex I subunit 4 family.

It localises to the mitochondrion membrane. It carries out the reaction a ubiquinone + NADH + 5 H(+)(in) = a ubiquinol + NAD(+) + 4 H(+)(out). Functionally, core subunit of the mitochondrial membrane respiratory chain NADH dehydrogenase (Complex I) that is believed to belong to the minimal assembly required for catalysis. Complex I functions in the transfer of electrons from NADH to the respiratory chain. The immediate electron acceptor for the enzyme is believed to be ubiquinone. The chain is NADH-ubiquinone oxidoreductase chain 4 from Aedes aegypti (Yellowfever mosquito).